The following is a 681-amino-acid chain: MDLYMIVLLSLCGLLRAQETTDTISLDNCCEDGKKRGLESQDCSSLPLISESTTCRVVQEQCCSAVLEDSICTSGINMAKDQSSCDALLSGSSTCETKTTKMCCECCLLGSSRCRIRVSPVSSVCRWSISRGPGVRSCCVDKQPAHGVQPSKGDAQNTEDQCRAAGCAQRCLNGTCSCLDGFKLKTDGKHCEDINECLLGPHHCVTGERCINTLGSYRCQREISCGTGYELTDNNKCKDIDECDLGTHNCAAEMECQNTAGSFRCRPRMQCAAGFIQDALGSCIDINECVSVTALSRGQMCFNTVGSFICQRHSVTCGRGYHLNAEGTRCVDIDECAGPDNSCDGHGCINLVGSYRCECRTGFIFNSISRSCEDIDECRNYPGRLCAHKCENILGSYKCSCTAGFKLADDGRNCDDVNECESSPCSQGCANVYGSYQSYCRRGYQLSDADGITCEDIDECALPTGGHICSYRCHNTPGSFHCTCPASGYTLAANGRSCQDIDECLTGTHSCSESESCFNIQGGFRCLSFDCPANYRRSGDTRPRVDRADIIRCVKSCQHNDISCVLNPILSHSHTAISLPTFREFNKPEEIVFLRSPTPTHLPHMDSPEIVYDILEGNIQNSFDIIKRLDHGMIVGVVKQVRPLVGPVRTVLKLAMNYVTNGVVSHRNIINVRIYVSEFWF.

The N-terminal stretch at Met-1–Ala-17 is a signal peptide. 33 disulfide bridges follow: Cys-29/Cys-55, Cys-30/Cys-62, Cys-43/Cys-63, Cys-72/Cys-103, Cys-85/Cys-104, Cys-106/Cys-125, Cys-107/Cys-138, Cys-114/Cys-139, Cys-162/Cys-171, Cys-167/Cys-176, Cys-178/Cys-191, Cys-197/Cys-210, Cys-204/Cys-219, Cys-225/Cys-237, Cys-243/Cys-256, Cys-250/Cys-265, Cys-271/Cys-283, Cys-289/Cys-301, Cys-317/Cys-330, Cys-336/Cys-348, Cys-343/Cys-357, Cys-359/Cys-372, Cys-378/Cys-390, Cys-386/Cys-399, Cys-401/Cys-414, Cys-420/Cys-429, Cys-440/Cys-454, Cys-460/Cys-473, Cys-469/Cys-482, Cys-484/Cys-498, Cys-504/Cys-517, Cys-511/Cys-526, and Cys-531/Cys-553. 3 consecutive Anaphylatoxin-like domains span residues Cys-29 to Cys-63, Glu-68 to Cys-107, and Leu-108 to Cys-139. The EGF-like 1 domain maps to Thr-158–Glu-192. Asn-173 carries N-linked (GlcNAc...) asparagine glycosylation. Residues Asp-193–Lys-238 enclose the EGF-like 2; calcium-binding domain. In terms of domain architecture, EGF-like 3; calcium-binding spans Asp-239–Ile-284. Residues Asp-285 to Val-331 enclose the EGF-like 4; calcium-binding domain. Positions Asp-332–Glu-373 constitute an EGF-like 5; calcium-binding domain. One can recognise an EGF-like 6; calcium-binding domain in the interval Asp-374 to Asp-415. The 40-residue stretch at Asp-416 to Glu-455 folds into the EGF-like 7; calcium-binding domain. The 44-residue stretch at Asp-456–Gln-499 folds into the EGF-like 8; calcium-binding domain. Positions Asp-500–Val-554 constitute an EGF-like 9; calcium-binding domain.

It belongs to the fibulin family. Homomultimerizes and interacts with various extracellular matrix components such as FN1, LAMA1, NID, AGC1 and CSPG2.

Its subcellular location is the secreted. The protein resides in the extracellular space. The protein localises to the extracellular matrix. Incorporated into fibronectin-containing matrix fibers. May play a role in cell adhesion and migration along protein fibers within the extracellular matrix (ECM). Could be important for certain developmental processes and contribute to the supramolecular organization of ECM architecture, in particular to those of basement membranes. The chain is Fibulin-1 (fbln1) from Danio rerio (Zebrafish).